The following is a 394-amino-acid chain: Elongation factor Tu (394 aa).

The tr-type G domain occupies 10–204 (KPHVNIGTIG…AVDSYIPQPV (195 aa)). The segment at 19-26 (GHVDHGKT) is G1. Residue 19 to 26 (GHVDHGKT) participates in GTP binding. Position 26 (threonine 26) interacts with Mg(2+). Residues 60 to 64 (GITIS) are G2. The segment at 81–84 (DCPG) is G3. Residues 81–85 (DCPGH) and 136–139 (NKID) contribute to the GTP site. Residues 136 to 139 (NKID) are G4. The G5 stretch occupies residues 174 to 176 (SAL).

It belongs to the TRAFAC class translation factor GTPase superfamily. Classic translation factor GTPase family. EF-Tu/EF-1A subfamily. Monomer.

It is found in the cytoplasm. It carries out the reaction GTP + H2O = GDP + phosphate + H(+). GTP hydrolase that promotes the GTP-dependent binding of aminoacyl-tRNA to the A-site of ribosomes during protein biosynthesis. This Rickettsia rickettsii protein is Elongation factor Tu.